Consider the following 609-residue polypeptide: UvrABC system protein C (609 aa).

Positions 16–94 (SSPGVYRMYD…IKQYMPKYNV (79 aa)) constitute a GIY-YIG domain. Positions 203–238 (QQVMSVLVQKMEQASSDMRYEQAALYRDQITALRRV) constitute a UVR domain.

The protein belongs to the UvrC family. As to quaternary structure, interacts with UvrB in an incision complex.

Its subcellular location is the cytoplasm. The UvrABC repair system catalyzes the recognition and processing of DNA lesions. UvrC both incises the 5' and 3' sides of the lesion. The N-terminal half is responsible for the 3' incision and the C-terminal half is responsible for the 5' incision. This chain is UvrABC system protein C, found in Shewanella pealeana (strain ATCC 700345 / ANG-SQ1).